The sequence spans 580 residues: Arginine--tRNA ligase (580 aa).

The short motif at 131–141 (ANPTGPMHVGH) is the 'HIGH' region element.

It belongs to the class-I aminoacyl-tRNA synthetase family. In terms of assembly, monomer.

It is found in the cytoplasm. The catalysed reaction is tRNA(Arg) + L-arginine + ATP = L-arginyl-tRNA(Arg) + AMP + diphosphate. This Cereibacter sphaeroides (strain ATCC 17023 / DSM 158 / JCM 6121 / CCUG 31486 / LMG 2827 / NBRC 12203 / NCIMB 8253 / ATH 2.4.1.) (Rhodobacter sphaeroides) protein is Arginine--tRNA ligase.